The following is a 488-amino-acid chain: Capsid protein (488 aa).

The span at 80-93 shows a compositional bias: acidic residues; that stretch reads ISEDESDSGEEPEF. Positions 80-143 are disordered; it reads ISEDESDSGE…QPKTIPGQKQ (64 aa). Basic and acidic residues predominate over residues 94 to 109; it reads EQVRMDRTGGTEIPKE. Residues 121 to 124 carry the Nuclear localization signal motif; it reads RKRK. Residues 134 to 143 show a composition bias toward polar residues; the sequence is QPKTIPGQKQ. The CCHC-type zinc-finger motif lies at 410-427; that stretch reads CRCWICNIEGHYANECPN. The tract at residues 463-488 is disordered; sequence YKEEEEETSTEESDDESSTSEDSDSD. Residues 464–488 show a composition bias toward acidic residues; it reads KEEEEETSTEESDDESSTSEDSDSD.

This sequence belongs to the caulimoviridae capsid protein family. In terms of assembly, interacts (via nuclear localization signal) with host importin alpha.

The protein localises to the virion. It is found in the host nucleus. Self assembles to form an icosahedral capsid, about 50 nm in diameter, nm, composed of 420 subunits of the viral capsid protein. The capsid encapsulates the genomic dsDNA. Following virus entry into host cell, provides nuclear import of the viral genome. Virus particles do not enter the nucleus, but dock at the nuclear membrane through the interaction with host importins. The polypeptide is Capsid protein (Arabidopsis thaliana (Mouse-ear cress)).